Here is a 341-residue protein sequence, read N- to C-terminus: Biotin synthase (341 aa).

The Radical SAM core domain occupies 40-267 (AEIQVSTLLS…RSMVRLSAGR (228 aa)). Residues Cys55, Cys59, and Cys62 each coordinate [4Fe-4S] cluster. Cys99, Cys130, Cys190, and Arg262 together coordinate [2Fe-2S] cluster.

Belongs to the radical SAM superfamily. Biotin synthase family. As to quaternary structure, homodimer. [4Fe-4S] cluster is required as a cofactor. [2Fe-2S] cluster serves as cofactor.

The catalysed reaction is (4R,5S)-dethiobiotin + (sulfur carrier)-SH + 2 reduced [2Fe-2S]-[ferredoxin] + 2 S-adenosyl-L-methionine = (sulfur carrier)-H + biotin + 2 5'-deoxyadenosine + 2 L-methionine + 2 oxidized [2Fe-2S]-[ferredoxin]. Its pathway is cofactor biosynthesis; biotin biosynthesis; biotin from 7,8-diaminononanoate: step 2/2. Its function is as follows. Catalyzes the conversion of dethiobiotin (DTB) to biotin by the insertion of a sulfur atom into dethiobiotin via a radical-based mechanism. The chain is Biotin synthase from Xylella fastidiosa (strain M23).